The chain runs to 128 residues: Large ribosomal subunit protein bL12 (128 aa).

The protein belongs to the bacterial ribosomal protein bL12 family. Homodimer. Part of the ribosomal stalk of the 50S ribosomal subunit. Forms a multimeric L10(L12)X complex, where L10 forms an elongated spine to which 2 to 4 L12 dimers bind in a sequential fashion. Binds GTP-bound translation factors.

Forms part of the ribosomal stalk which helps the ribosome interact with GTP-bound translation factors. Is thus essential for accurate translation. This Aquifex aeolicus (strain VF5) protein is Large ribosomal subunit protein bL12.